The chain runs to 916 residues: Translation initiation factor IF-2 (916 aa).

Residues 55–324 form a disordered region; it reads EPKAVTPTSK…NHNANLKPVT (270 aa). The span at 77–88 shows a compositional bias: low complexity; it reads AAEPKAAATKPA. Composition is skewed to basic and acidic residues over residues 98–121, 129–161, and 198–212; these read FKAEREARAKAEAERRQNNGERRN, RQKDNRNHGSQDRRNDNRNNRNRQNDNRRDNRN, and RQSETRFHEAQEAKR. A compositionally biased stretch (low complexity) spans 227-250; sequence KEQPTVEAAATAAPQAQPQTVEQV. Basic and acidic residues predominate over residues 264-281; sequence ARPDKSRDFSHENEDGPK. The segment covering 291 to 304 has biased composition (low complexity); the sequence is KQNQVRNQKNSNWN. A compositionally biased stretch (basic residues) spans 305–314; it reads KKNKKSKNNR. Residues 418-585 enclose the tr-type G domain; it reads ERAPVVTIMG…TVLLVAEIQE (168 aa). Residues 427–434 form a G1 region; the sequence is GHVDHGKT. GTP is bound at residue 427 to 434; that stretch reads GHVDHGKT. The G2 stretch occupies residues 452 to 456; it reads GITQH. The G3 stretch occupies residues 473 to 476; that stretch reads DTPG. GTP contacts are provided by residues 473–477 and 527–530; these read DTPGH and NKID. Residues 527 to 530 form a G4 region; the sequence is NKID. Residues 563–565 form a G5 region; it reads SAK.

It belongs to the TRAFAC class translation factor GTPase superfamily. Classic translation factor GTPase family. IF-2 subfamily.

The protein resides in the cytoplasm. One of the essential components for the initiation of protein synthesis. Protects formylmethionyl-tRNA from spontaneous hydrolysis and promotes its binding to the 30S ribosomal subunits. Also involved in the hydrolysis of GTP during the formation of the 70S ribosomal complex. This Streptococcus mutans serotype c (strain ATCC 700610 / UA159) protein is Translation initiation factor IF-2.